The sequence spans 351 residues: Protein FAM118B (351 aa).

Alanine 2 is subject to N-acetylalanine. Serine 9 is modified (phosphoserine).

This sequence belongs to the FAM118 family.

The protein resides in the nucleus. The protein localises to the cajal body. Its function is as follows. May play a role in Cajal bodies formation. This chain is Protein FAM118B (FAM118B), found in Homo sapiens (Human).